Reading from the N-terminus, the 244-residue chain is Phosphoadenosine 5'-phosphosulfate reductase (244 aa).

C239 acts as the Nucleophile; cysteine thiosulfonate intermediate in catalysis.

This sequence belongs to the PAPS reductase family. CysH subfamily.

Its subcellular location is the cytoplasm. It catalyses the reaction [thioredoxin]-disulfide + sulfite + adenosine 3',5'-bisphosphate + 2 H(+) = [thioredoxin]-dithiol + 3'-phosphoadenylyl sulfate. It functions in the pathway sulfur metabolism; hydrogen sulfide biosynthesis; sulfite from sulfate: step 3/3. Catalyzes the formation of sulfite from phosphoadenosine 5'-phosphosulfate (PAPS) using thioredoxin as an electron donor. The chain is Phosphoadenosine 5'-phosphosulfate reductase from Salmonella newport (strain SL254).